Here is a 239-residue protein sequence, read N- to C-terminus: Orotidine 5'-phosphate decarboxylase (239 aa).

Residues Asp10, Lys32, 59 to 68, Thr122, Arg184, Gln193, Gly213, and Arg214 each bind substrate; that span reads DLKLHDIPNT. Lys61 (proton donor) is an active-site residue.

The protein belongs to the OMP decarboxylase family. Type 1 subfamily. In terms of assembly, homodimer.

The catalysed reaction is orotidine 5'-phosphate + H(+) = UMP + CO2. It functions in the pathway pyrimidine metabolism; UMP biosynthesis via de novo pathway; UMP from orotate: step 2/2. In terms of biological role, catalyzes the decarboxylation of orotidine 5'-monophosphate (OMP) to uridine 5'-monophosphate (UMP). The polypeptide is Orotidine 5'-phosphate decarboxylase (Geobacillus thermodenitrificans (strain NG80-2)).